A 621-amino-acid chain; its full sequence is Phosphoenolpyruvate carboxykinase [GTP] (621 aa).

Substrate contacts are provided by residues R83 and 217 to 219; that span reads YGG. Positions 226 and 245 each coordinate Mn(2+). S267 is a substrate binding site. Residue 268 to 273 participates in GTP binding; the sequence is MCGKTS. Residue C269 is part of the active site. D286 is a binding site for Mn(2+). A substrate-binding site is contributed by 381 to 383; it reads NAR. 2 residues coordinate GTP: R383 and R415.

It belongs to the phosphoenolpyruvate carboxykinase [GTP] family. Mn(2+) is required as a cofactor.

Its subcellular location is the cytoplasm. The enzyme catalyses oxaloacetate + GTP = phosphoenolpyruvate + GDP + CO2. Its pathway is carbohydrate biosynthesis; gluconeogenesis. Catalyzes the conversion of oxaloacetate (OAA) to phosphoenolpyruvate (PEP), the rate-limiting step in the metabolic pathway that produces glucose from lactate and other precursors derived from the citric acid cycle. The sequence is that of Phosphoenolpyruvate carboxykinase [GTP] from Pyrococcus horikoshii (strain ATCC 700860 / DSM 12428 / JCM 9974 / NBRC 100139 / OT-3).